A 182-amino-acid polypeptide reads, in one-letter code: CASP-like protein 5B1 (182 aa).

The interval 1 to 20 (GDASHAVDHPIGGHPEHEHD) is disordered. Residues 1-41 (GDASHAVDHPIGGHPEHEHDLREEEGPLIFPMKDLPGTPGT) are Cytoplasmic-facing. Residues 42 to 62 (VGGLALRMGQFIFAAASVVIM) form a helical membrane-spanning segment. At 63 to 73 (VTSDEFINFTA) the chain is on the extracellular side. Asparagine 70 is a glycosylation site (N-linked (GlcNAc...) asparagine). A helical membrane pass occupies residues 74–94 (FCYLAAAMALQFLWSFVLATI). The Cytoplasmic segment spans residues 95-108 (DVYALLIKRGLPNS). A helical membrane pass occupies residues 109–129 (ILLSLFVVGDWVTATLSLAAA). Topologically, residues 130 to 159 (CSTAGITVLFDKDLNYCDQMHCRRYQLSAT) are extracellular. Residues 160–180 (MAFFSWVLIAISSLITLLLLV) form a helical membrane-spanning segment. Over 181 to 182 (SE) the chain is Cytoplasmic.

Belongs to the Casparian strip membrane proteins (CASP) family. Homodimer and heterodimers.

Its subcellular location is the cell membrane. The sequence is that of CASP-like protein 5B1 from Picea sitchensis (Sitka spruce).